A 119-amino-acid polypeptide reads, in one-letter code: Large ribosomal subunit protein uL18 (119 aa).

The segment at 1-20 (MSQIDKASRRQKIKDRSRVK) is disordered. Basic residues predominate over residues 9–20 (RRQKIKDRSRVK).

Belongs to the universal ribosomal protein uL18 family. In terms of assembly, part of the 50S ribosomal subunit; part of the 5S rRNA/L5/L18/L25 subcomplex. Contacts the 5S and 23S rRNAs.

Functionally, this is one of the proteins that bind and probably mediate the attachment of the 5S RNA into the large ribosomal subunit, where it forms part of the central protuberance. The sequence is that of Large ribosomal subunit protein uL18 from Chlorobium phaeobacteroides (strain DSM 266 / SMG 266 / 2430).